A 451-amino-acid chain; its full sequence is PTS system cellobiose-specific EIIC component (451 aa).

The region spanning Leu-8–Phe-423 is the PTS EIIC type-3 domain. Helical transmembrane passes span Gly-31 to Leu-51, Leu-72 to Ala-92, Leu-104 to Phe-124, Gly-138 to Val-158, Phe-187 to Leu-207, Leu-227 to Leu-247, Thr-250 to Met-270, Phe-293 to Met-313, Ile-347 to Val-367, and Ile-407 to Trp-427.

The protein localises to the cell membrane. Functionally, the phosphoenolpyruvate-dependent sugar phosphotransferase system (sugar PTS), a major carbohydrate active transport system, catalyzes the phosphorylation of incoming sugar substrates concomitantly with their translocation across the cell membrane. The enzyme II CelABD PTS system is involved in cellobiose transport. The sequence is that of PTS system cellobiose-specific EIIC component from Geobacillus stearothermophilus (Bacillus stearothermophilus).